Reading from the N-terminus, the 574-residue chain is Sentrin-specific protease 3 (574 aa).

The disordered stretch occupies residues 1 to 125; the sequence is MKETIQGTGS…PTHRKTCSQR (125 aa). A phosphoserine mark is found at Ser-54, Ser-73, and Ser-75. A compositionally biased stretch (acidic residues) spans 74-93; it reads ASEEEEEEEEEEDEDEEEEV. The span at 112 to 125 shows a compositional bias: basic residues; it reads RPSRPTHRKTCSQR. Short sequence motifs (nuclear localization signal) lie at residues 125 to 128 and 153 to 159; these read RRRR and RHRGRRR. The disordered stretch occupies residues 161-181; it reads LAHPKNHLSPQQGGATPQVPS. The residue at position 169 (Ser-169) is a Phosphoserine. A Phosphothreonine modification is found at Thr-176. 4 positions are modified to phosphoserine: Ser-181, Ser-188, Ser-212, and Ser-232. A protease region spans residues 386–543; it reads HVLTMDDLGT…AFVLQYCKHL (158 aa). Residues His-465 and Asp-482 contribute to the active site. Cys-532 (nucleophile) is an active-site residue.

Belongs to the peptidase C48 family. As to quaternary structure, component of some MLL1/MLL complex, at least composed of the core components KMT2A/MLL1, ASH2L, HCFC1/HCF1, WDR5 and RBBP5, as well as the facultative components BACC1, CHD8, E2F6, HSP70, INO80C, KANSL1, LAS1L, MAX, MCRS1, MGA, MYST1/MOF, PELP1, PHF20, PRP31, RING2, RUVB1/TIP49A, RUVB2/TIP49B, SENP3, TAF1, TAF4, TAF6, TAF7, TAF9 and TEX10. Interacts with EP300, NPM1 and CDCA8. Component of the 5FMC complex, at least composed of PELP1, LAS1L, TEX10, WDR18 and SENP3; the complex interacts with methylated CHTOP and ZNF148. Interacts with NOL9. Interacts with CCAR2.

It localises to the nucleus. The protein localises to the nucleolus. The protein resides in the nucleoplasm. It is found in the cytoplasm. With respect to regulation, on oxidative stress, SENP3 degradation is blocked by inhibition of its ubiquitination, which stabilizes it as it accumulates in the nucleoplasm. Protease that releases SUMO2 and SUMO3 monomers from sumoylated substrates, but has only weak activity against SUMO1 conjugates. Deconjugates SUMO2 from MEF2D, which increases its transcriptional activation capability. Deconjugates SUMO2 and SUMO3 from CDCA8. Redox sensor that, when redistributed into nucleoplasm, can act as an effector to enhance HIF1A transcriptional activity by desumoylating EP300. Required for rRNA processing through deconjugation of SUMO2 and SUMO3 from nucleophosmin, NPM1. Plays a role in the regulation of sumoylation status of ZNF148. Functions as a component of the Five Friends of Methylated CHTOP (5FMC) complex; the 5FMC complex is recruited to ZNF148 by methylated CHTOP, leading to desumoylation of ZNF148 and subsequent transactivation of ZNF148 target genes. Deconjugates SUMO2 from KAT5. Catalyzes desumoylation of MRE11. This Homo sapiens (Human) protein is Sentrin-specific protease 3.